Reading from the N-terminus, the 135-residue chain is Methylglyoxal synthase (135 aa).

An MGS-like domain is found at 1–135 (MQKTLALVAH…GLYERAVPEF (135 aa)). Substrate is bound by residues histidine 10, lysine 14, 36 to 39 (TGTT), and 56 to 57 (SG). The active-site Proton donor/acceptor is aspartate 62. Histidine 89 lines the substrate pocket.

This sequence belongs to the methylglyoxal synthase family.

The enzyme catalyses dihydroxyacetone phosphate = methylglyoxal + phosphate. Its function is as follows. Catalyzes the formation of methylglyoxal from dihydroxyacetone phosphate. This is Methylglyoxal synthase from Pseudoalteromonas atlantica (strain T6c / ATCC BAA-1087).